A 325-amino-acid polypeptide reads, in one-letter code: MSSSNKNWPSMFKSKPCNNNHHHQHEIDTPSYMHYSNCNLSSSFSSDRIPDPKPRWNPKPEQIRILESIFNSGTINPPREEIQRIRIRLQEYGQIGDANVFYWFQNRKSRAKHKLRVHHKSPKMSKKDKTVIPSTDADHCFGFVNQETGLYPVQNNELVVTEPAGFLFPVHNDPSAAQSAFGFGDFVVPVVTEEGMAFSTVNNGVNLETNENFDKIPAINLYGGDGNGGGNCFPPLTVPLTINQSQEKRDVGLSGGEDVGDNVYPVRMTVFINEMPIEVVSGLFNVKAAFGNDAVLINSFGQPILTDEFGVTYQPLQNGAIYYLI.

The homeobox; WUS-type DNA-binding region spans 51–115; the sequence is DPKPRWNPKP…NRKSRAKHKL (65 aa).

The protein belongs to the WUS homeobox family. In terms of tissue distribution, expressed only in the egg cell. Not detected in the pollen tube. Expressed in the zygote, the basal cell, and later the suspensor. Expressed in all suspensor cells, except the hypophysis, and in the embryo surrounding region (ESR) endosperm cells. Strongly expressed in the suspensor cells, with a weak expression also detected throughout the developing embryo.

The protein resides in the nucleus. In terms of biological role, probable transcription factor, which may be involved in embryonic patterning. May be required for basal embryo development after fertilization. Acts partially redundantly with STIP in promoting embryonic cell division and proliferation. Promotes cotyledon boundary formation by maintaining the symmetry in CUC genes expression domains. This is WUSCHEL-related homeobox 8 from Arabidopsis thaliana (Mouse-ear cress).